The chain runs to 355 residues: Guanine nucleotide-binding protein G(z) subunit alpha (355 aa).

Residues 1–14 (MGCRQSSEEKEAAR) are compositionally biased toward basic and acidic residues. Residues 1 to 26 (MGCRQSSEEKEAARRSRRIDRHLRSE) form a disordered region. Residue Gly2 is the site of N-myristoyl glycine attachment. A lipid anchor (S-palmitoyl cysteine) is attached at Cys3. The 324-residue stretch at 32 to 355 (REIKLLLLGT…QNNLKYIGLC (324 aa)) folds into the G-alpha domain. The segment at 35-48 (KLLLLGTSNSGKST) is G1 motif. GTP contacts are provided by residues 40–47 (GTSNSGKS), 176–182 (LRSRDMT), 201–205 (DVGGQ), 270–273 (NKKD), and Ala327. Residues Ser47 and Thr182 each contribute to the Mg(2+) site. The tract at residues 174-182 (DILRSRDMT) is G2 motif. Residues 197–206 (FKMVDVGGQR) form a G3 motif region. Positions 266 to 273 (ILFLNKKD) are G4 motif. Residues 325 to 330 (TCATDT) are G5 motif.

The protein belongs to the G-alpha family. G(i/o/t/z) subfamily. In terms of assembly, G-proteins are composed of 3 units; alpha, beta and gamma. The alpha chain contains the guanine nucleotide binding site. Interacts with ADGRB2.

Its subcellular location is the membrane. Guanine nucleotide-binding proteins (G proteins) are involved as modulators or transducers in various transmembrane signaling systems. In Mus musculus (Mouse), this protein is Guanine nucleotide-binding protein G(z) subunit alpha (Gnaz).